The primary structure comprises 370 residues: uncharacterized protein (370 aa).

10 consecutive transmembrane segments (helical) span residues 6–26 (AVVFILAAFLLWGAADYCLGN), 49–69 (IGIVSLAPVLAAILIPIVAPF), 79–99 (SFANTILAIDMGGYALAGEMA), 111–131 (FLGTMMGPAIVFTIPVALGII), 143–163 (ILIGLCTVPIGCLIGGLCAGF), 167–187 (MIGKNLLIPSLLSAVIAFGLW), 206–226 (MVAIIGLAAVSVETMTGIVLI), 236–256 (IQTTGTIAIALAGAFPMTAFI), 307–327 (VAFAVSGAFVLGSHLGFVAGM), and 333–353 (AAMIIGKLAGGVTAAAAAAWM).

Belongs to the EutH family.

The protein resides in the cell membrane. This is an uncharacterized protein from Bacillus subtilis (strain 168).